We begin with the raw amino-acid sequence, 221 residues long: Deoxyribose-phosphate aldolase (221 aa).

Residue aspartate 90 is the Proton donor/acceptor of the active site. Lysine 152 functions as the Schiff-base intermediate with acetaldehyde in the catalytic mechanism. The Proton donor/acceptor role is filled by lysine 181.

This sequence belongs to the DeoC/FbaB aldolase family. DeoC type 1 subfamily.

It is found in the cytoplasm. The catalysed reaction is 2-deoxy-D-ribose 5-phosphate = D-glyceraldehyde 3-phosphate + acetaldehyde. Its pathway is carbohydrate degradation; 2-deoxy-D-ribose 1-phosphate degradation; D-glyceraldehyde 3-phosphate and acetaldehyde from 2-deoxy-alpha-D-ribose 1-phosphate: step 2/2. In terms of biological role, catalyzes a reversible aldol reaction between acetaldehyde and D-glyceraldehyde 3-phosphate to generate 2-deoxy-D-ribose 5-phosphate. This Exiguobacterium sp. (strain ATCC BAA-1283 / AT1b) protein is Deoxyribose-phosphate aldolase.